Here is a 279-residue protein sequence, read N- to C-terminus: NH(3)-dependent NAD(+) synthetase (279 aa).

ATP is bound at residue 39–46; that stretch reads GLSGGIDS. Residue Asp45 coordinates Mg(2+). Residue Arg122 coordinates deamido-NAD(+). Thr142 provides a ligand contact to ATP. Glu147 contacts Mg(2+). Positions 155 and 162 each coordinate deamido-NAD(+). ATP-binding residues include Lys171 and Ser193. 253–254 provides a ligand contact to deamido-NAD(+); sequence HK.

The protein belongs to the NAD synthetase family. As to quaternary structure, homodimer.

The catalysed reaction is deamido-NAD(+) + NH4(+) + ATP = AMP + diphosphate + NAD(+) + H(+). The protein operates within cofactor biosynthesis; NAD(+) biosynthesis; NAD(+) from deamido-NAD(+) (ammonia route): step 1/1. Its function is as follows. Catalyzes the ATP-dependent amidation of deamido-NAD to form NAD. Uses ammonia as a nitrogen source. In Sulfolobus acidocaldarius (strain ATCC 33909 / DSM 639 / JCM 8929 / NBRC 15157 / NCIMB 11770), this protein is NH(3)-dependent NAD(+) synthetase.